The primary structure comprises 147 residues: Hemoglobin subunit gamma (147 aa).

A Globin domain is found at 3–147; it reads NFTAEDKAAI…VASALGSRYH (145 aa). The heme b site is built by His64 and His93.

The protein belongs to the globin family. As to quaternary structure, heterotetramer of two alpha chains and two gamma chains in fetal hemoglobin (Hb F). Red blood cells.

Its function is as follows. Gamma chains make up the fetal hemoglobin F, in combination with alpha chains. In Aotus azarae (Azara's night monkey), this protein is Hemoglobin subunit gamma (HBG).